Reading from the N-terminus, the 175-residue chain is RNA pyrophosphohydrolase (175 aa).

The Nudix hydrolase domain maps to 6 to 149 (GYRPNVGIVI…KRDVYRRVMK (144 aa)). The Nudix box signature appears at 38 to 59 (GGINPGETPEQAMYRELFEEVG).

Belongs to the Nudix hydrolase family. RppH subfamily. It depends on a divalent metal cation as a cofactor.

Accelerates the degradation of transcripts by removing pyrophosphate from the 5'-end of triphosphorylated RNA, leading to a more labile monophosphorylated state that can stimulate subsequent ribonuclease cleavage. This is RNA pyrophosphohydrolase from Yersinia pseudotuberculosis serotype O:1b (strain IP 31758).